The sequence spans 2803 residues: Microtubule-associated protein 1A (2803 aa).

Phosphoserine occurs at positions 114, 117, 118, 121, and 155. Tyr177 is modified (phosphotyrosine). Disordered regions lie at residues 302–466 (GAVP…DLKP) and 486–516 (IDRSRAIRGEKELSSEPQTPPAQKGTVPLPT). A phosphoserine mark is found at Ser319, Ser322, and Ser384. The segment covering 335 to 390 (AKREEVVEEGAKEARSELAKELAKTEKKAKESSEKPPEKPAKPERVKTESSEALKA) has biased composition (basic and acidic residues). A compositionally biased stretch (basic residues) spans 391–406 (EKRKLIKDKVGKKHLK). Basic and acidic residues-rich tracts occupy residues 407 to 464 (EKIS…KPDL) and 486 to 499 (IDRSRAIRGEKELS). Tandem repeats lie at residues 415–417 (KKD), 420–422 (KKE), 427–429 (RKE), 431–433 (KKD), 436–438 (RKE), 440–442 (KKD), 444–446 (KKE), and 449–451 (RKD). The interval 415 to 541 (KKDKEKKEIK…TQDFEEMKRE (127 aa)) is 9 X 3 AA repeats of K-K-[DE]. Thr504 is subject to Phosphothreonine. Phosphoserine occurs at positions 526 and 527. Repeat 9 spans residues 539–541 (KRE). 2 stretches are compositionally biased toward basic and acidic residues: residues 539–554 (KREERALLAEQRDTGL) and 585–596 (QEEHVMKEKELV). 5 disordered regions span residues 539–712 (KREE…KAPE), 734–806 (YIQD…GTPE), 847–1080 (EDQS…VNID), 1109–1548 (TGPI…EKKD), and 1573–1605 (EENHQTQEQESLVQEDKTRKPKMLEEKSPEKVK). Phosphoserine occurs at positions 605 and 612. The residue at position 616 (Thr616) is a Phosphothreonine. A compositionally biased stretch (basic and acidic residues) spans 623 to 667 (WEEKKQREAERLPDRTEAREESEPEVKEDVIEKAELEEMEEVHPS). Phosphoserine is present on residues Ser644, Ser667, and Ser787. Polar residues-rich tracts occupy residues 847-860 (EDQSVASLTAPQTE) and 871-883 (TVTSIPSSRTEAT). A phosphoserine mark is found at Ser874, Ser877, Ser878, and Ser891. The residue at position 894 (Thr894) is a Phosphothreonine. Residues Ser896, Ser900, Ser909, Ser986, Ser996, Ser1004, Ser1013, Ser1019, and Ser1029 each carry the phosphoserine modification. Basic and acidic residues predominate over residues 1031–1065 (GDTKRTPGVGKEDAAEETVKPGPEEGTLEKEEKVP). Residues Ser1069, Ser1144, Ser1146, Ser1160, Ser1172, Ser1190, Ser1200, Ser1203, Ser1209, Ser1218, Ser1221, and Ser1264 each carry the phosphoserine modification. Basic and acidic residues predominate over residues 1131 to 1146 (KPQKDEVLRYPDRSLS). The span at 1154-1169 (SVLSVPSPDTANQEPT) shows a compositional bias: polar residues. Polar residues-rich tracts occupy residues 1211-1224 (DVSSKQLSPESLGT) and 1264-1278 (SPPTDGTTRYSAQTD). The segment covering 1289 to 1299 (PASSFSHSTPS) has biased composition (low complexity). Phosphoserine occurs at positions 1326, 1329, 1544, 1600, and 1626. Composition is skewed to basic and acidic residues over residues 1338-1548 (IAIK…EKKD) and 1586-1605 (QEDKTRKPKMLEEKSPEKVK). The span at 1632 to 1642 (RAREQEEKYWR) shows a compositional bias: basic and acidic residues. 3 disordered regions span residues 1632–1684 (RARE…RYWR), 1713–1879 (DGQG…FSWG), and 1892–2673 (EGAA…LVNG). Ser1654 bears the Phosphoserine mark. Positions 1655–1666 (PTREEPAGEQKE) are enriched in basic and acidic residues. Phosphoserine occurs at positions 1675, 1749, 1762, 1776, 1791, 1797, 1801, 1812, and 1818. Residues 1852–1867 (LPPAPLSPAPGPPTPA) are compositionally biased toward pro residues. The span at 1907–1929 (KDYRKAEGEREEEGRAEAPDKSS) shows a compositional bias: basic and acidic residues. Residue Ser1931 is modified to Phosphoserine. Over residues 1951–1964 (PEQREPTPYPDERS) the composition is skewed to basic and acidic residues. Thr1957 is subject to Phosphothreonine. The segment covering 2019 to 2033 (SPISPKSLQSDTPTF) has biased composition (polar residues). At Ser2022 the chain carries Phosphoserine. Pro residues predominate over residues 2042–2066 (TVPPRPEPGPSMEPSLTPPAVPPRA). At Thr2058 the chain carries Phosphothreonine. A phosphoserine mark is found at Ser2074, Ser2104, Ser2106, and Ser2108. Over residues 2086–2122 (PDRRSPSPKESGRSHWDDSTSDSELEKGAREQPEKEA) the composition is skewed to basic and acidic residues. A compositionally biased stretch (pro residues) spans 2175–2184 (PAPPQLPSPA). 5 positions are modified to phosphoserine: Ser2235, Ser2252, Ser2256, Ser2259, and Ser2260. The span at 2257 to 2268 (EGSSSEATTPVI) shows a compositional bias: polar residues. The span at 2312 to 2325 (ASLDLALAPAPSLP) shows a compositional bias: low complexity. Phosphoserine is present on Ser2449. The segment covering 2461–2473 (IDDRDLSTEEVRL) has biased composition (basic and acidic residues). Residues 2502-2514 (SASDSGSSQSDSD) show a composition bias toward low complexity. Positions 2559–2575 (DPPPLPQPDPRPSPPRP) are enriched in pro residues. Residues 2590 to 2602 (GRVERLREKEKVQ) are compositionally biased toward basic and acidic residues. Phosphoserine is present on residues Ser2649 and Ser2664.

The protein belongs to the MAP1 family. As to quaternary structure, 3 different light chains, LC1 (a cleavage product of MAP1B), LC2 (a cleavage product of MAP1A) and LC3 (produced by one of the MAP1LC3 genes), can associate with the MAP1A or MAP1B heavy chains. Interacts with TIAM2. Interacts with guanylate kinase-like domain of DLG1, DLG2 and DLG4. Binds to CSNK1D. Interacts with ELAVL4. Phosphorylated by CSNK1D. Post-translationally, LC2 is generated from MAP1A by proteolytic processing. As to expression, brain.

It is found in the cytoplasm. It localises to the cytoskeleton. In terms of biological role, structural protein involved in the filamentous cross-bridging between microtubules and other skeletal elements. This is Microtubule-associated protein 1A (MAP1A) from Homo sapiens (Human).